The sequence spans 150 residues: Macrodomain Ter protein (150 aa).

Belongs to the MatP family. Homodimer.

It localises to the cytoplasm. Its function is as follows. Required for spatial organization of the terminus region of the chromosome (Ter macrodomain) during the cell cycle. Prevents early segregation of duplicated Ter macrodomains during cell division. Binds specifically to matS, which is a 13 bp signature motif repeated within the Ter macrodomain. This Salmonella agona (strain SL483) protein is Macrodomain Ter protein.